The following is a 429-amino-acid chain: MPIIEQVRAREILDSRGNPTVEVEVALIDGTFARAAVPSGASTGEHEAVELRDGGDRYGGKGVQKAVQAVLDEIGPAVIGLNADDQRLVDQALVDLDGTPDKSRLGGNAILGVSLAVAKAAADSAELPLFRYVGGPNAHILPVPMMNILNGGAHADTAVDIQEFMVAPIGAPSFVEALRWGAEVYHALKSVLKKEGLSTGLGDEGGFAPDVAGTTAALDLISRAIESAGLRPGADVALALDAAATEFFTDGTGYVFEGTTRTADQMTEFYAGLLGAYPLVSIEDPLSEDDWDGWAALTASIGDRVQIVGDDIFVTNPERLEEGIERGVANALLVKVNQIGTLTETLDAVTLAHHGGYRTMISHRSGETEDTMIADLAVAIGSGQIKTGAPARSERVAKYNQLLRIEEALGDAARYAGDLAFPRFACETK.

Gln162 contributes to the (2R)-2-phosphoglycerate binding site. The active-site Proton donor is Glu204. Asp241, Glu283, and Asp310 together coordinate Mg(2+). (2R)-2-phosphoglycerate is bound by residues Lys335, Arg364, Ser365, and Lys386. The Proton acceptor role is filled by Lys335.

The protein belongs to the enolase family. Requires Mg(2+) as cofactor.

The protein localises to the cytoplasm. The protein resides in the secreted. It localises to the cell surface. It catalyses the reaction (2R)-2-phosphoglycerate = phosphoenolpyruvate + H2O. It participates in carbohydrate degradation; glycolysis; pyruvate from D-glyceraldehyde 3-phosphate: step 4/5. Catalyzes the reversible conversion of 2-phosphoglycerate (2-PG) into phosphoenolpyruvate (PEP). It is essential for the degradation of carbohydrates via glycolysis. The sequence is that of Enolase from Mycobacterium tuberculosis (strain ATCC 25177 / H37Ra).